The primary structure comprises 450 residues: MSLMQFSGLLVVWLLSTLFIATLTWFEFRRVRFNFNVFFSLLFLLTFFFGFPLTSVLVFRFDVGVAPPEILLQALLSAACFYAVYYVTYKTRLRKRVTDVPRKPLFTMNRVETHLTWVMLMGIALVSVGIFFMHNGFLLFRLHSYSQIFSSEVSGVALKRFFYFFIPAMLVIYFLRQDSKAWLFFLVSTVAFGLLTYMIVGGTRANIIIAFAIFLFIGIIRGWISLWMLVAAGVLGIVGMFWLALKRYGLNVSGDEAFYTFLYLTRDTFSPWENLALLLQNYDNIDFQGLAPIVRDFYVFIPSWLWPGRPGIVLNSANYFTWEVLNNHSGLAISPTLIGSLVVMGGALFIPLGAVAVGLIIKWFDWLYELGNRETNRYKAAILHSFCFGAIFNMIVLAREGLDSFVSRVVFFLVIFGACLLVAKLLFWLFDCAGLVHQRAKPQPQTQVEG.

11 helical membrane-spanning segments follow: residues phenylalanine 6–phenylalanine 26, valine 37–leucine 57, valine 63–alanine 83, leucine 120–phenylalanine 140, glycine 155–leucine 175, alanine 181–glycine 201, isoleucine 207–tryptophan 227, methionine 228–tyrosine 248, leucine 341–isoleucine 361, tyrosine 378–alanine 398, and valine 410–phenylalanine 430.

The protein belongs to the WzyE family. Probably part of a complex composed of WzxE, WzyE and WzzE.

It localises to the cell inner membrane. The protein operates within bacterial outer membrane biogenesis; enterobacterial common antigen biosynthesis. Functionally, probably involved in the polymerization of enterobacterial common antigen (ECA) trisaccharide repeat units. The polypeptide is Probable ECA polymerase (Citrobacter koseri (strain ATCC BAA-895 / CDC 4225-83 / SGSC4696)).